The primary structure comprises 194 residues: NADH-quinone oxidoreductase subunit B 1 (194 aa).

[4Fe-4S] cluster contacts are provided by cysteine 47, cysteine 48, cysteine 113, and cysteine 142.

Belongs to the complex I 20 kDa subunit family. As to quaternary structure, NDH-1 is composed of 14 different subunits. Subunits NuoB, C, D, E, F, and G constitute the peripheral sector of the complex. It depends on [4Fe-4S] cluster as a cofactor.

It localises to the cell inner membrane. The catalysed reaction is a quinone + NADH + 5 H(+)(in) = a quinol + NAD(+) + 4 H(+)(out). NDH-1 shuttles electrons from NADH, via FMN and iron-sulfur (Fe-S) centers, to quinones in the respiratory chain. The immediate electron acceptor for the enzyme in this species is believed to be ubiquinone. Couples the redox reaction to proton translocation (for every two electrons transferred, four hydrogen ions are translocated across the cytoplasmic membrane), and thus conserves the redox energy in a proton gradient. This Sorangium cellulosum (strain So ce56) (Polyangium cellulosum (strain So ce56)) protein is NADH-quinone oxidoreductase subunit B 1.